Here is a 352-residue protein sequence, read N- to C-terminus: Histidinol-phosphate aminotransferase (352 aa).

At Lys-210 the chain carries N6-(pyridoxal phosphate)lysine.

It belongs to the class-II pyridoxal-phosphate-dependent aminotransferase family. Histidinol-phosphate aminotransferase subfamily. Homodimer. It depends on pyridoxal 5'-phosphate as a cofactor.

It catalyses the reaction L-histidinol phosphate + 2-oxoglutarate = 3-(imidazol-4-yl)-2-oxopropyl phosphate + L-glutamate. The protein operates within amino-acid biosynthesis; L-histidine biosynthesis; L-histidine from 5-phospho-alpha-D-ribose 1-diphosphate: step 7/9. This Clostridium acetobutylicum (strain ATCC 824 / DSM 792 / JCM 1419 / IAM 19013 / LMG 5710 / NBRC 13948 / NRRL B-527 / VKM B-1787 / 2291 / W) protein is Histidinol-phosphate aminotransferase.